We begin with the raw amino-acid sequence, 440 residues long: Chromosome partition protein MukF (440 aa).

A leucine-zipper region spans residues 208 to 236; sequence LSETSGTLRELQDTLEAAGDKLQANLLRI.

It belongs to the MukF family. As to quaternary structure, interacts, and probably forms a ternary complex, with MukE and MukB via its C-terminal region. The complex formation is stimulated by calcium or magnesium. It is required for an interaction between MukE and MukB.

It localises to the cytoplasm. Its subcellular location is the nucleoid. Its function is as follows. Involved in chromosome condensation, segregation and cell cycle progression. May participate in facilitating chromosome segregation by condensation DNA from both sides of a centrally located replisome during cell division. Not required for mini-F plasmid partitioning. Probably acts via its interaction with MukB and MukE. Overexpression results in anucleate cells. It has a calcium binding activity. The polypeptide is Chromosome partition protein MukF (Yersinia pestis).